Consider the following 736-residue polypeptide: Elongation factor 2 (736 aa).

The region spanning 18 to 234 is the tr-type G domain; the sequence is TRVRNIGIIA…VIDAYTASDK (217 aa). GTP contacts are provided by residues 27 to 34, 93 to 97, and 147 to 150; these read AHVDHGKT, DTPGH, and NKVD. Histidine 603 bears the Diphthamide mark.

Belongs to the TRAFAC class translation factor GTPase superfamily. Classic translation factor GTPase family. EF-G/EF-2 subfamily.

The protein localises to the cytoplasm. Its function is as follows. Catalyzes the GTP-dependent ribosomal translocation step during translation elongation. During this step, the ribosome changes from the pre-translocational (PRE) to the post-translocational (POST) state as the newly formed A-site-bound peptidyl-tRNA and P-site-bound deacylated tRNA move to the P and E sites, respectively. Catalyzes the coordinated movement of the two tRNA molecules, the mRNA and conformational changes in the ribosome. This chain is Elongation factor 2 (fusA), found in Saccharolobus solfataricus (strain ATCC 35092 / DSM 1617 / JCM 11322 / P2) (Sulfolobus solfataricus).